We begin with the raw amino-acid sequence, 222 residues long: Probable fimbrial chaperone EcpB (222 aa).

An N-terminal signal peptide occupies residues 1–20 (MKKHLLPLALLFSGISPAQA).

Belongs to the EcpB/EcpE family.

Functionally, part of the ecpRABCDE operon, which encodes the E.coli common pilus (ECP). ECP is found in both commensal and pathogenic strains and plays a dual role in early-stage biofilm development and host cell recognition. The polypeptide is Probable fimbrial chaperone EcpB (ecpB) (Escherichia coli O18:K1:H7 (strain IHE3034 / ExPEC)).